Consider the following 316-residue polypeptide: Leucine-rich repeat-containing protein 73 (316 aa).

LRR repeat units follow at residues 57 to 78 (SLAQLNLNLGVVSSPSRIKQLA), 86 to 106 (SIQSLFLHGSPLTDAGLALLN), 114 to 137 (ALVALDLGDCMLGDEAINLICGLL), 145 to 166 (GLKELTLSANPGITPKGWSRLA), 174 to 187 (QVRVLNLDYNPLGD), 202 to 223 (TLEVLDLEGTGLTNQSAQTLLD), and 231 to 250 (ALRSLVLAENSISPELQQQI). The tract at residues 257–296 (GEEEEEMAGGAADTQEWGRGREPAAHQRGGSSWKCPSDPN) is disordered. A compositionally biased stretch (basic and acidic residues) spans 272-281 (EWGRGREPAA).

In Rattus norvegicus (Rat), this protein is Leucine-rich repeat-containing protein 73 (Lrrc73).